The primary structure comprises 717 residues: ATP-dependent RNA helicase homolog DQX1 (717 aa).

In terms of domain architecture, Helicase ATP-binding spans 57–225 (QLESNPTGVV…WGNPPIVHIP (169 aa)). 70 to 77 (GEPGSGKS) lines the ATP pocket. Residues 170–173 (DEAQ) carry the DEAQ box motif. In terms of domain architecture, Helicase C-terminal spans 248 to 447 (ACQAVLELCR…ALMQALEDLD (200 aa)). The tract at residues 694–717 (GMADSTAGSKSSSAQEFRDPCVLQ) is disordered. A compositionally biased stretch (polar residues) spans 699–708 (TAGSKSSSAQ).

It localises to the nucleus. In terms of biological role, might be involved in RNA metabolism; it is missing helicase motif III and may not have helicase activity. The protein is ATP-dependent RNA helicase homolog DQX1 (DQX1) of Homo sapiens (Human).